The chain runs to 299 residues: Ribosomal RNA small subunit methyltransferase H (299 aa).

Residues 32-34 (AGH), D52, F79, D100, and Q107 contribute to the S-adenosyl-L-methionine site.

It belongs to the methyltransferase superfamily. RsmH family.

It is found in the cytoplasm. It carries out the reaction cytidine(1402) in 16S rRNA + S-adenosyl-L-methionine = N(4)-methylcytidine(1402) in 16S rRNA + S-adenosyl-L-homocysteine + H(+). Functionally, specifically methylates the N4 position of cytidine in position 1402 (C1402) of 16S rRNA. The sequence is that of Ribosomal RNA small subunit methyltransferase H from Mycoplasmopsis pulmonis (strain UAB CTIP) (Mycoplasma pulmonis).